The primary structure comprises 375 residues: D-aspartate oxidase (375 aa).

The N-terminal stretch at 1 to 17 is a signal peptide; it reads MATVCVVGSGILGLAVA. S9, L12, D34, S51, and G55 together coordinate FAD. A glycan (N-linked (GlcNAc...) asparagine) is linked at N203. FAD-binding residues include R322, G354, and Y355.

It belongs to the DAMOX/DASOX family. Requires FAD as cofactor.

It catalyses the reaction D-aspartate + O2 + H2O = oxaloacetate + H2O2 + NH4(+). The enzyme catalyses D-glutamate + O2 + H2O = H2O2 + 2-oxoglutarate + NH4(+). In terms of biological role, selectively catalyzes the oxidative deamination of acidic amino acids. Protects the organism from the toxicity of D-amino acids. Enables the organism to utilize D-amino acids as a source of nutrients. Enables the organism to utilize D-aspartate as a nitrogen source. This chain is D-aspartate oxidase (DDO), found in Komagataella phaffii (strain GS115 / ATCC 20864) (Yeast).